A 78-amino-acid chain; its full sequence is D-alanyl carrier protein (78 aa).

The region spanning 1–78 (MDFNQEVLSV…QIIKQLNELR (78 aa)) is the Carrier domain. Serine 36 bears the O-(pantetheine 4'-phosphoryl)serine mark.

It belongs to the DltC family. In terms of processing, 4'-phosphopantetheine is transferred from CoA to a specific serine of apo-DCP.

It localises to the cytoplasm. It functions in the pathway cell wall biogenesis; lipoteichoic acid biosynthesis. Carrier protein involved in the D-alanylation of lipoteichoic acid (LTA). The loading of thioester-linked D-alanine onto DltC is catalyzed by D-alanine--D-alanyl carrier protein ligase DltA. The DltC-carried D-alanyl group is further transferred to cell membrane phosphatidylglycerol (PG) by forming an ester bond, probably catalyzed by DltD. D-alanylation of LTA plays an important role in modulating the properties of the cell wall in Gram-positive bacteria, influencing the net charge of the cell wall. In Bacillus licheniformis (strain ATCC 14580 / DSM 13 / JCM 2505 / CCUG 7422 / NBRC 12200 / NCIMB 9375 / NCTC 10341 / NRRL NRS-1264 / Gibson 46), this protein is D-alanyl carrier protein.